The primary structure comprises 841 residues: Formin-like protein 10 (841 aa).

The signal sequence occupies residues 1-25; that stretch reads MDGLCYVIFIIFSLLSCAFSPLSYA. Residues 102–122 traverse the membrane as a helical segment; that stretch reads LIPAISAVLAAATLIALAFFF. Disordered stretches follow at residues 137–166, 254–297, and 403–512; these read SKSLASDISQSQQQTLPCPPPRNNNTQNKL, ISSH…RTVR, and KSSW…SKQR. The segment covering 139 to 152 has biased composition (polar residues); it reads SLASDISQSQQQTL. The segment covering 254 to 278 has biased composition (low complexity); it reads ISSHSDSPAMSPSAAMSPPMNSTAP. Positions 279 to 293 are enriched in polar residues; the sequence is HWSTNQNTHSPSSPE. The segment covering 426–444 has biased composition (pro residues); it reads LPPPQRPPPAMPEPPPLVP. Positions 469–841 constitute an FH2 domain; the sequence is EGTTDRPKPK…KKMEVTSSLA (373 aa). Positions 502–512 are enriched in polar residues; the sequence is YNSSNANSKQR.

The protein belongs to the formin-like family. Class-I subfamily.

The protein localises to the membrane. Functionally, might be involved in the organization and polarity of the actin cytoskeleton. The sequence is that of Formin-like protein 10 (FH10) from Arabidopsis thaliana (Mouse-ear cress).